A 130-amino-acid chain; its full sequence is Small ribosomal subunit protein uS11 (130 aa).

It belongs to the universal ribosomal protein uS11 family. Part of the 30S ribosomal subunit. Interacts with proteins S7 and S18. Binds to IF-3.

Its function is as follows. Located on the platform of the 30S subunit, it bridges several disparate RNA helices of the 16S rRNA. Forms part of the Shine-Dalgarno cleft in the 70S ribosome. The protein is Small ribosomal subunit protein uS11 of Alteromonas mediterranea (strain DSM 17117 / CIP 110805 / LMG 28347 / Deep ecotype).